We begin with the raw amino-acid sequence, 506 residues long: GPI mannosyltransferase 3 (506 aa).

N-linked (GlcNAc...) asparagine glycosylation occurs at asparagine 115. A run of 6 helical transmembrane segments spans residues 180-200 (AFAC…LLFW), 229-249 (YGRL…NIIA), 257-277 (FVFP…SSLY), 285-305 (YLSQ…LLTM), 330-350 (FVYP…SSFS), and 358-378 (FFFL…RFHQ). Asparagine 395 carries N-linked (GlcNAc...) asparagine glycosylation.

This sequence belongs to the glycosyltransferase 22 family. PIGB subfamily.

The protein localises to the endoplasmic reticulum membrane. The protein operates within glycolipid biosynthesis; glycosylphosphatidylinositol-anchor biosynthesis. Its function is as follows. Mannosyltransferase involved in glycosylphosphatidylinositol-anchor biosynthesis. Transfers the third mannose to Man2-GlcN-acyl-PI during GPI precursor assembly. The chain is GPI mannosyltransferase 3 (gpi10) from Schizosaccharomyces pombe (strain 972 / ATCC 24843) (Fission yeast).